Reading from the N-terminus, the 242-residue chain is Ribosomal RNA small subunit methyltransferase G (242 aa).

S-adenosyl-L-methionine contacts are provided by residues Gly-82, Phe-87, 133 to 134 (AE), and Arg-152.

Belongs to the methyltransferase superfamily. RNA methyltransferase RsmG family.

It localises to the cytoplasm. In terms of biological role, specifically methylates the N7 position of a guanine in 16S rRNA. This is Ribosomal RNA small subunit methyltransferase G from Acetivibrio thermocellus (strain ATCC 27405 / DSM 1237 / JCM 9322 / NBRC 103400 / NCIMB 10682 / NRRL B-4536 / VPI 7372) (Clostridium thermocellum).